We begin with the raw amino-acid sequence, 179 residues long: Peptide methionine sulfoxide reductase MsrA (179 aa).

Residue cysteine 14 is part of the active site.

It belongs to the MsrA Met sulfoxide reductase family.

It carries out the reaction L-methionyl-[protein] + [thioredoxin]-disulfide + H2O = L-methionyl-(S)-S-oxide-[protein] + [thioredoxin]-dithiol. The enzyme catalyses [thioredoxin]-disulfide + L-methionine + H2O = L-methionine (S)-S-oxide + [thioredoxin]-dithiol. Its function is as follows. Has an important function as a repair enzyme for proteins that have been inactivated by oxidation. Catalyzes the reversible oxidation-reduction of methionine sulfoxide in proteins to methionine. The polypeptide is Peptide methionine sulfoxide reductase MsrA (Nitrobacter winogradskyi (strain ATCC 25391 / DSM 10237 / CIP 104748 / NCIMB 11846 / Nb-255)).